The sequence spans 89 residues: Small ribosomal subunit protein uS15 (89 aa).

This sequence belongs to the universal ribosomal protein uS15 family. In terms of assembly, part of the 30S ribosomal subunit. Forms a bridge to the 50S subunit in the 70S ribosome, contacting the 23S rRNA.

Its function is as follows. One of the primary rRNA binding proteins, it binds directly to 16S rRNA where it helps nucleate assembly of the platform of the 30S subunit by binding and bridging several RNA helices of the 16S rRNA. Functionally, forms an intersubunit bridge (bridge B4) with the 23S rRNA of the 50S subunit in the ribosome. In Streptococcus pyogenes serotype M1, this protein is Small ribosomal subunit protein uS15.